Here is a 740-residue protein sequence, read N- to C-terminus: Phosphoribosylformylglycinamidine synthase subunit PurL (740 aa).

H53 is a catalytic residue. The ATP site is built by Y56 and K95. Residue E97 participates in Mg(2+) binding. Substrate contacts are provided by residues 98–101 (SHNH) and R120. H99 (proton acceptor) is an active-site residue. D121 contacts Mg(2+). Q244 contacts substrate. Mg(2+) is bound at residue D272. Position 316–318 (316–318 (ESQ)) interacts with substrate. ATP-binding residues include D497 and G534. N535 lines the Mg(2+) pocket. S537 contacts substrate.

It belongs to the FGAMS family. Monomer. Part of the FGAM synthase complex composed of 1 PurL, 1 PurQ and 2 PurS subunits.

The protein localises to the cytoplasm. The enzyme catalyses N(2)-formyl-N(1)-(5-phospho-beta-D-ribosyl)glycinamide + L-glutamine + ATP + H2O = 2-formamido-N(1)-(5-O-phospho-beta-D-ribosyl)acetamidine + L-glutamate + ADP + phosphate + H(+). It functions in the pathway purine metabolism; IMP biosynthesis via de novo pathway; 5-amino-1-(5-phospho-D-ribosyl)imidazole from N(2)-formyl-N(1)-(5-phospho-D-ribosyl)glycinamide: step 1/2. Functionally, part of the phosphoribosylformylglycinamidine synthase complex involved in the purines biosynthetic pathway. Catalyzes the ATP-dependent conversion of formylglycinamide ribonucleotide (FGAR) and glutamine to yield formylglycinamidine ribonucleotide (FGAM) and glutamate. The FGAM synthase complex is composed of three subunits. PurQ produces an ammonia molecule by converting glutamine to glutamate. PurL transfers the ammonia molecule to FGAR to form FGAM in an ATP-dependent manner. PurS interacts with PurQ and PurL and is thought to assist in the transfer of the ammonia molecule from PurQ to PurL. In Rhodospirillum rubrum (strain ATCC 11170 / ATH 1.1.1 / DSM 467 / LMG 4362 / NCIMB 8255 / S1), this protein is Phosphoribosylformylglycinamidine synthase subunit PurL.